Reading from the N-terminus, the 122-residue chain is Basic phospholipase A2 Cdr-12 (122 aa).

Disulfide bonds link C26–C115, C28–C44, C43–C95, C49–C122, C50–C88, C57–C81, and C75–C86. The Ca(2+) site is built by Y27, G29, and G31. H47 is a catalytic residue. D48 lines the Ca(2+) pocket. D89 is an active-site residue.

Requires Ca(2+) as cofactor. In terms of tissue distribution, expressed by the venom gland.

It is found in the secreted. It carries out the reaction a 1,2-diacyl-sn-glycero-3-phosphocholine + H2O = a 1-acyl-sn-glycero-3-phosphocholine + a fatty acid + H(+). Snake venom phospholipase A2 (PLA2) that induces myonecrosis and edema upon intramuscular injections in mice. In vitro, causes a potent blockade of neuromuscular transmission in young chicken biventer cervicis preparation and produces cytotoxicity in murine C2C12 skeletal muscle myotubes and lack cytolytic activity upon myoblasts in vitro. PLA2 catalyzes the calcium-dependent hydrolysis of the 2-acyl groups in 3-sn-phosphoglycerides. This Crotalus durissus ruruima (South American rattlesnake) protein is Basic phospholipase A2 Cdr-12.